A 249-amino-acid chain; its full sequence is Glucosamine-6-phosphate deaminase (249 aa).

Asp-67 functions as the Proton acceptor; for enolization step in the catalytic mechanism. Asn-136 acts as the For ring-opening step in catalysis. His-138 (proton acceptor; for ring-opening step) is an active-site residue. Glu-143 serves as the catalytic For ring-opening step.

It belongs to the glucosamine/galactosamine-6-phosphate isomerase family. NagB subfamily.

It carries out the reaction alpha-D-glucosamine 6-phosphate + H2O = beta-D-fructose 6-phosphate + NH4(+). It functions in the pathway amino-sugar metabolism; N-acetylneuraminate degradation; D-fructose 6-phosphate from N-acetylneuraminate: step 5/5. In terms of biological role, catalyzes the reversible isomerization-deamination of glucosamine 6-phosphate (GlcN6P) to form fructose 6-phosphate (Fru6P) and ammonium ion. This is Glucosamine-6-phosphate deaminase from Clostridium botulinum (strain Eklund 17B / Type B).